We begin with the raw amino-acid sequence, 250 residues long: Small ribosomal subunit protein uS3 (250 aa).

A KH type-2 domain is found at 39 to 107 (VRAALKKRLY…EVHLNIVEIR (69 aa)). The tract at residues 215–250 (LDKRLATESGPAGEGGGRERGDRPDRGDRRDRRDRA) is disordered. Residues 230–250 (GGRERGDRPDRGDRRDRRDRA) are compositionally biased toward basic and acidic residues.

It belongs to the universal ribosomal protein uS3 family. As to quaternary structure, part of the 30S ribosomal subunit. Forms a tight complex with proteins S10 and S14.

Functionally, binds the lower part of the 30S subunit head. Binds mRNA in the 70S ribosome, positioning it for translation. This is Small ribosomal subunit protein uS3 from Caulobacter vibrioides (strain ATCC 19089 / CIP 103742 / CB 15) (Caulobacter crescentus).